A 368-amino-acid polypeptide reads, in one-letter code: uncharacterized protein (368 aa).

Belongs to the CdaR family.

This is an uncharacterized protein from Haemophilus influenzae (strain ATCC 51907 / DSM 11121 / KW20 / Rd).